A 288-amino-acid chain; its full sequence is Lysosomal thioesterase PPT2-B (288 aa).

Residues 1 to 20 (MRGYLLLLPLLLCLVDNSVS) form the signal peptide. An intrachain disulfide couples cysteine 95 to cysteine 103. Serine 97 functions as the Nucleophile in the catalytic mechanism. Residue asparagine 143 is glycosylated (N-linked (GlcNAc...) asparagine). A disulfide bridge links cysteine 151 with cysteine 162. N-linked (GlcNAc...) asparagine glycosylation occurs at asparagine 192. Residues aspartate 214 and histidine 269 contribute to the active site. Asparagine 275 is a glycosylation site (N-linked (GlcNAc...) asparagine).

This sequence belongs to the palmitoyl-protein thioesterase family.

Its subcellular location is the lysosome. The catalysed reaction is hexadecanoyl-CoA + H2O = hexadecanoate + CoA + H(+). The enzyme catalyses S-hexadecanoyl-N-acetylcysteamine + H2O = N-acetylcysteamine + hexadecanoate + H(+). In terms of biological role, catalyzes the cleavage of thioester bonds from S-palmitoyl-CoA or S-palmitoyl-N-acetylcysteamine (unbranched structures) but does not have activity against palmitoylcysteine or palmitoylated proteins, branched structures or bulky head groups. Conversely, hydrolyzes both long and short chain fatty acyl-CoA substrate. The chain is Lysosomal thioesterase PPT2-B (ppt2-b) from Xenopus laevis (African clawed frog).